The primary structure comprises 398 residues: Succinyl-diaminopimelate desuccinylase (398 aa).

His73 contributes to the Zn(2+) binding site. The active site involves Asp75. Residue Asp106 coordinates Zn(2+). The active-site Proton acceptor is Glu140. Zn(2+) contacts are provided by Glu141, Glu169, and His366.

It belongs to the peptidase M20A family. DapE subfamily. In terms of assembly, homodimer. Zn(2+) serves as cofactor. Co(2+) is required as a cofactor.

It carries out the reaction N-succinyl-(2S,6S)-2,6-diaminopimelate + H2O = (2S,6S)-2,6-diaminopimelate + succinate. Its pathway is amino-acid biosynthesis; L-lysine biosynthesis via DAP pathway; LL-2,6-diaminopimelate from (S)-tetrahydrodipicolinate (succinylase route): step 3/3. Its function is as follows. Catalyzes the hydrolysis of N-succinyl-L,L-diaminopimelic acid (SDAP), forming succinate and LL-2,6-diaminopimelate (DAP), an intermediate involved in the bacterial biosynthesis of lysine and meso-diaminopimelic acid, an essential component of bacterial cell walls. The sequence is that of Succinyl-diaminopimelate desuccinylase from Agrobacterium fabrum (strain C58 / ATCC 33970) (Agrobacterium tumefaciens (strain C58)).